The primary structure comprises 192 residues: uncharacterized protein (192 aa).

The region spanning 29 to 160 is the Nudix hydrolase domain; sequence RRQAAVLIPL…PLDIQRRGHD (132 aa). The short motif at 67–89 is the Nudix box element; the sequence is GAVDSTDASLIAAALREAHEEVA. Residues E83 and E87 each contribute to the Mg(2+) site.

It belongs to the Nudix hydrolase family. PCD1 subfamily. It depends on Mn(2+) as a cofactor. Mg(2+) serves as cofactor.

In terms of biological role, probably mediates the hydrolysis of some nucleoside diphosphate derivatives. This is an uncharacterized protein from Enterobacter sp. (strain 638).